The following is a 233-amino-acid chain: Large ribosomal subunit protein uL1 (233 aa).

This sequence belongs to the universal ribosomal protein uL1 family. In terms of assembly, part of the 50S ribosomal subunit.

Its function is as follows. Binds directly to 23S rRNA. The L1 stalk is quite mobile in the ribosome, and is involved in E site tRNA release. In terms of biological role, protein L1 is also a translational repressor protein, it controls the translation of the L11 operon by binding to its mRNA. In Pseudoalteromonas atlantica (strain T6c / ATCC BAA-1087), this protein is Large ribosomal subunit protein uL1.